Here is a 297-residue protein sequence, read N- to C-terminus: 4-diphosphocytidyl-2-C-methyl-D-erythritol kinase (297 aa).

Residue Lys-10 is part of the active site. 95 to 105 contacts ATP; that stretch reads PVAGGMAGGSA. Asp-137 is a catalytic residue.

The protein belongs to the GHMP kinase family. IspE subfamily.

The enzyme catalyses 4-CDP-2-C-methyl-D-erythritol + ATP = 4-CDP-2-C-methyl-D-erythritol 2-phosphate + ADP + H(+). It participates in isoprenoid biosynthesis; isopentenyl diphosphate biosynthesis via DXP pathway; isopentenyl diphosphate from 1-deoxy-D-xylulose 5-phosphate: step 3/6. Catalyzes the phosphorylation of the position 2 hydroxy group of 4-diphosphocytidyl-2C-methyl-D-erythritol. This is 4-diphosphocytidyl-2-C-methyl-D-erythritol kinase from Streptomyces avermitilis (strain ATCC 31267 / DSM 46492 / JCM 5070 / NBRC 14893 / NCIMB 12804 / NRRL 8165 / MA-4680).